The sequence spans 73 residues: Translation initiation factor IF-1 (73 aa).

Residues 1-73 (MAKKDGAIEV…TRGRIVYRYK (73 aa)) form the S1-like domain.

Belongs to the IF-1 family. As to quaternary structure, component of the 30S ribosomal translation pre-initiation complex which assembles on the 30S ribosome in the order IF-2 and IF-3, IF-1 and N-formylmethionyl-tRNA(fMet); mRNA recruitment can occur at any time during PIC assembly.

Its subcellular location is the cytoplasm. Its function is as follows. One of the essential components for the initiation of protein synthesis. Stabilizes the binding of IF-2 and IF-3 on the 30S subunit to which N-formylmethionyl-tRNA(fMet) subsequently binds. Helps modulate mRNA selection, yielding the 30S pre-initiation complex (PIC). Upon addition of the 50S ribosomal subunit IF-1, IF-2 and IF-3 are released leaving the mature 70S translation initiation complex. The chain is Translation initiation factor IF-1 from Mycolicibacterium gilvum (strain PYR-GCK) (Mycobacterium gilvum (strain PYR-GCK)).